Here is a 624-residue protein sequence, read N- to C-terminus: Actin-related protein 8 (624 aa).

Residue Met-1 is modified to N-acetylmethionine. The segment covering Met-1–Gly-25 has biased composition (basic and acidic residues). A disordered region spans residues Met-1–Pro-29. Residues Ser-55 and Thr-56 each coordinate ATP. Ser-132 is modified (phosphoserine). Residue Asp-283–Asp-286 participates in ATP binding. Residue Ser-412 is modified to Phosphoserine. Residues Ser-430–Leu-462 are disordered.

It belongs to the actin family. ARP8 subfamily. As to quaternary structure, component of the chromatin remodeling INO80 complex; specifically part of a complex module associated with the DBINO domain of INO80. Interacts with ACTR5; the interaction is observed in asynchronous (interphase) cells but not in metaphase-arrested cells indicative for a possible dissociation of the INO80 complex in mitotic cells. Exists as monomers and dimers, but the dimer is most probably the biologically relevant form required for stable interactions with histones that exploits the twofold symmetry of the nucleosome core.

The protein resides in the nucleus. The protein localises to the chromosome. Its function is as follows. Plays an important role in the functional organization of mitotic chromosomes. Exhibits low basal ATPase activity, and unable to polymerize. Functionally, proposed core component of the chromatin remodeling INO80 complex which is involved in transcriptional regulation, DNA replication and probably DNA repair. Required for the recruitment of INO80 (and probably the INO80 complex) to sites of DNA damage. Strongly prefer nucleosomes and H3-H4 tetramers over H2A-H2B dimers, suggesting it may act as a nucleosome recognition module within the complex. The polypeptide is Actin-related protein 8 (ACTR8) (Homo sapiens (Human)).